The following is a 238-amino-acid chain: Small ribosomal subunit protein eS4 (238 aa).

Residues 38 to 100 enclose the S4 RNA-binding domain; sequence LPLAIVIRDV…TGEVYRVVPD (63 aa).

It belongs to the eukaryotic ribosomal protein eS4 family.

This is Small ribosomal subunit protein eS4 from Pyrobaculum arsenaticum (strain DSM 13514 / JCM 11321 / PZ6).